The following is a 636-amino-acid chain: Endoglucanase 4 (636 aa).

A signal peptide spans 1-25; sequence MTRRWSFLVQCFTFKKKEGVRSRYM. Aspartate 82 functions as the Nucleophile in the catalytic mechanism. Catalysis depends on residues histidine 400, aspartate 438, and glutamate 447. Positions 478–635 constitute a CBM3 domain; the sequence is KVEDEFFVEA…GDLVFGTLPN (158 aa).

This sequence belongs to the glycosyl hydrolase 9 (cellulase E) family.

The protein localises to the secreted. It carries out the reaction Endohydrolysis of (1-&gt;4)-beta-D-glucosidic linkages in cellulose, lichenin and cereal beta-D-glucans.. This Bacillus sp. (strain KSM-522) protein is Endoglucanase 4.